A 215-amino-acid chain; its full sequence is Probable phosphoglycerate mutase GpmB (215 aa).

Substrate is bound by residues 8-15 (RHGETQWN), 21-22 (QG), arginine 58, lysine 60, 82-85 (ELDM), 104-105 (RR), and 151-152 (GI). Histidine 9 (tele-phosphohistidine intermediate) is an active-site residue. Glutamate 82 functions as the Proton donor/acceptor in the catalytic mechanism.

This sequence belongs to the phosphoglycerate mutase family. GpmB subfamily.

It carries out the reaction (2R)-2-phosphoglycerate = (2R)-3-phosphoglycerate. It functions in the pathway carbohydrate degradation; glycolysis; pyruvate from D-glyceraldehyde 3-phosphate: step 3/5. This is Probable phosphoglycerate mutase GpmB from Salmonella paratyphi C (strain RKS4594).